Reading from the N-terminus, the 954-residue chain is cGMP-specific 3',5'-cyclic phosphodiesterase alpha (954 aa).

The Cytoplasmic segment spans residues 1 to 259 (MMDTKVDQTI…NTFYSSFPFK (259 aa)). The chain crosses the membrane as a helical span at residues 260–280 (LFLHSLYMIFICFIYFVVLYF). Residues 281 to 296 (MLLKKIYTHPFIFHLS) lie on the Extracellular side of the membrane. The helical transmembrane segment at 297–317 (VLKFLFDIIFFLSFILYPLFL) threads the bilayer. At 318–327 (RLKRIDKIIY) the chain is on the cytoplasmic side. Residues 328–348 (SSYISSYIFVCVTFLYSFIIF) traverse the membrane as a helical segment. Residues 349–365 (KCSSYSVKMNSNTYQNN) are Extracellular-facing. Residues 366–386 (FVFQNMLFLLINIIYICIFCF) form a helical membrane-spanning segment. Over 387–401 (LKNYMILYSFLYNCR) the chain is Cytoplasmic. The chain crosses the membrane as a helical span at residues 402-422 (FSIFCILFIFLYYYLFFSLDF). The Extracellular segment spans residues 423-432 (YRIIHLPLDN). Residues 433–453 (FFFPFLCFLFFSFLFIFKIIM) form a helical membrane-spanning segment. The Cytoplasmic portion of the chain corresponds to 454-954 (SLYYEYVYEK…LSKLELIKFE (501 aa)). The 345-residue stretch at 586-930 (NQEETKSFLS…ERWESHKNDN (345 aa)) folds into the PDEase domain. His-680 (proton donor) is an active-site residue. 680–684 (HTSLH) is a 3',5'-cyclic GMP binding site. His-684, His-720, Asp-721, and Asp-832 together coordinate Zn(2+). 3',5'-cyclic GMP is bound by residues Asp-721, Asp-832, and Gln-884. Position 721 (Asp-721) interacts with Mg(2+).

Belongs to the cyclic nucleotide phosphodiesterase family. Requires Zn(2+) as cofactor. The cofactor is Mg(2+).

Its subcellular location is the membrane. The enzyme catalyses 3',5'-cyclic GMP + H2O = GMP + H(+). The protein operates within purine metabolism; 3',5'-cyclic GMP degradation; GMP from 3',5'-cyclic GMP: step 1/1. With respect to regulation, not inhibited by cAMP. Inhibited by zaprinast. Its function is as follows. Specifically hydrolyzes the second messenger cGMP, which is a key regulator of many important physiological processes. The chain is cGMP-specific 3',5'-cyclic phosphodiesterase alpha from Plasmodium falciparum (isolate 3D7).